Consider the following 718-residue polypeptide: Polyribonucleotide nucleotidyltransferase (718 aa).

Mg(2+) is bound by residues D496 and D502. One can recognise a KH domain in the interval 563 to 622 (PRLLTIKIDPDMIGLVIGPGGKTIKGITEETGAKIDIEDDGTVTISAVDENKAKRARNIV). The S1 motif domain occupies 632 to 700 (GDVYAGRVTR…NKGRINLTRL (69 aa)).

This sequence belongs to the polyribonucleotide nucleotidyltransferase family. Mg(2+) is required as a cofactor.

The protein resides in the cytoplasm. It carries out the reaction RNA(n+1) + phosphate = RNA(n) + a ribonucleoside 5'-diphosphate. In terms of biological role, involved in mRNA degradation. Catalyzes the phosphorolysis of single-stranded polyribonucleotides processively in the 3'- to 5'-direction. The polypeptide is Polyribonucleotide nucleotidyltransferase (Trichormus variabilis (strain ATCC 29413 / PCC 7937) (Anabaena variabilis)).